An 814-amino-acid chain; its full sequence is Exostosin-like-3 homolog (814 aa).

The Cytoplasmic portion of the chain corresponds to 1-14 (MAIKLNGSSRSFVP). A helical; Signal-anchor for type II membrane protein membrane pass occupies residues 15-35 (SLRVSAFLIFIFFVITYIIIY). 6 N-linked (GlcNAc...) asparagine glycosylation sites follow: N36, N227, N297, N322, N454, and N492. At 36-814 (NVSFSEPSWI…QNHQKCFKYV (779 aa)) the chain is on the lumenal side. Residues R570, N595, N620, R625, D641, D642, and D643 each coordinate UDP-N-acetyl-alpha-D-glucosamine. D643 contributes to the Mn(2+) binding site. N-linked (GlcNAc...) asparagine glycosylation is present at N685. C726 and C774 form a disulfide bridge. UDP-N-acetyl-alpha-D-glucosamine-binding residues include E727, D728, and R771. D728 is a catalytic residue.

The protein belongs to the glycosyltransferase 47 family. Interacts with rib-1. Requires Mn(2+) as cofactor.

It localises to the endoplasmic reticulum membrane. It is found in the golgi apparatus membrane. The enzyme catalyses 3-O-(beta-D-GlcA-(1-&gt;3)-beta-D-Gal-(1-&gt;3)-beta-D-Gal-(1-&gt;4)-beta-D-Xyl)-L-seryl-[protein] + UDP-N-acetyl-alpha-D-glucosamine = 3-O-(alpha-D-GlcNAc-(1-&gt;4)-beta-D-GlcA-(1-&gt;3)-beta-D-Gal-(1-&gt;3)-beta-D-Gal-(1-&gt;4)-beta-D-Xyl)-L-seryl-[protein] + UDP + H(+). It carries out the reaction 3-O-{[(1-&gt;4)-beta-D-GlcA-(1-&gt;4)-alpha-D-GlcNAc](n)-(1-&gt;4)-beta-D-GlcA-(1-&gt;3)-beta-D-Gal-(1-&gt;3)-beta-D-Gal-(1-&gt;4)-beta-D-Xyl}-L-seryl-[protein] + UDP-N-acetyl-alpha-D-glucosamine = 3-O-{alpha-D-GlcNAc-[(1-&gt;4)-beta-D-GlcA-(1-&gt;4)-alpha-D-GlcNAc](n)-(1-&gt;4)-beta-D-GlcA-(1-&gt;3)-beta-D-Gal-(1-&gt;3)-beta-D-Gal-(1-&gt;4)-beta-D-Xyl}-L-seryl-[protein] + UDP + H(+). It catalyses the reaction 3-O-{alpha-D-GlcNAc-[(1-&gt;4)-beta-D-GlcA-(1-&gt;4)-alpha-D-GlcNAc](n)-(1-&gt;4)-beta-D-GlcA-(1-&gt;3)-beta-D-Gal-(1-&gt;3)-beta-D-Gal-(1-&gt;4)-beta-D-Xyl}-L-seryl-[protein] + UDP-alpha-D-glucuronate = 3-O-{[(1-&gt;4)-beta-D-GlcA-(1-&gt;4)-alpha-D-GlcNAc](n+1)-(1-&gt;4)-beta-D-GlcA-(1-&gt;3)-beta-D-Gal-(1-&gt;3)-beta-D-Gal-(1-&gt;4)-beta-D-Xyl}-L-seryl-[protein] + UDP + H(+). The protein operates within glycan metabolism; heparan sulfate biosynthesis. With respect to regulation, binding to rib-1 is required for GlcAT-II activity and for increasing GlcNAc-II activity in vitro. Glycosyltransferase required for the biosynthesis of heparan sulfate. Initiates heparan sulfate synthesis by transferring GlcNAc to the (GlcA-Gal-Gal-Xyl-)Ser core linker (GlcNAcT-I activity). In association with rib-1, is also responsible for the alternating addition of beta-1-4-linked glucuronic acid (GlcA) and alpha-1-4-linked N-acetylglucosamine (GlcNAc) units to nascent heparan sulfate chains (GlcNAcT-II and GlcAT-II activities). Required for normal ventral epidermal enclosure during the early stages of embryonic development. In addition, involved in the elongation of the pharyngeal isthmus during the later stages of embryonic development. Involved in the directed migration of hermaphrodite-specific neurons. The polypeptide is Exostosin-like-3 homolog (rib-2) (Caenorhabditis elegans).